Here is a 645-residue protein sequence, read N- to C-terminus: 1,4-alpha-glucan branching enzyme GlgB (645 aa).

The active-site Nucleophile is the aspartate 309. Glutamate 352 (proton donor) is an active-site residue. The segment at 619–645 (VKTRKGSKKQDGSKTKVRSNVTSRGKR) is disordered. The segment covering 636–645 (RSNVTSRGKR) has biased composition (polar residues).

The protein belongs to the glycosyl hydrolase 13 family. GlgB subfamily. As to quaternary structure, monomer.

It carries out the reaction Transfers a segment of a (1-&gt;4)-alpha-D-glucan chain to a primary hydroxy group in a similar glucan chain.. Its pathway is glycan biosynthesis; glycogen biosynthesis. Functionally, catalyzes the formation of the alpha-1,6-glucosidic linkages in glycogen by scission of a 1,4-alpha-linked oligosaccharide from growing alpha-1,4-glucan chains and the subsequent attachment of the oligosaccharide to the alpha-1,6 position. The sequence is that of 1,4-alpha-glucan branching enzyme GlgB from Bacillus anthracis (strain CDC 684 / NRRL 3495).